A 334-amino-acid polypeptide reads, in one-letter code: Protein OPG181 (334 aa).

This sequence belongs to the orthopoxvirus OPG181 family.

The polypeptide is Protein OPG181 (OPG181) (Vaccinia virus (strain Copenhagen) (VACV)).